Reading from the N-terminus, the 304-residue chain is ATP phosphoribosyltransferase (304 aa).

It belongs to the ATP phosphoribosyltransferase family. Long subfamily. It depends on Mg(2+) as a cofactor.

The protein resides in the cytoplasm. The catalysed reaction is 1-(5-phospho-beta-D-ribosyl)-ATP + diphosphate = 5-phospho-alpha-D-ribose 1-diphosphate + ATP. Its pathway is amino-acid biosynthesis; L-histidine biosynthesis; L-histidine from 5-phospho-alpha-D-ribose 1-diphosphate: step 1/9. Its activity is regulated as follows. Feedback inhibited by histidine. Its function is as follows. Catalyzes the condensation of ATP and 5-phosphoribose 1-diphosphate to form N'-(5'-phosphoribosyl)-ATP (PR-ATP). Has a crucial role in the pathway because the rate of histidine biosynthesis seems to be controlled primarily by regulation of HisG enzymatic activity. The sequence is that of ATP phosphoribosyltransferase from Xanthomonas campestris pv. campestris (strain 8004).